The following is a 454-amino-acid chain: MSKLSVVILAAGKGTRMYSDLPKVLHKVAGKPMVKHVIDTAKQLSAEQIHLIYGHGADLLKERLADEPVNWVFQAEQLGTGHAMQQAAPFFKDDENIVMLYGDAPLITKETLERLVAAKPENGIALLTVELENPTGYGRIIRENGSVVAIVEQKDATPEQLKITEVNTGVMVSDGASFKKWLARLDNDNAQGEYYMTDVIGLANQDGFKVAAVTADDMMEVEGANNRLQLAALERYFQRKQATALLLAGVSLADPERFDLRGELEHGKDVEIDVNVIIEGKVKLGNGVKIGAGCVLKNAIIGDNTEIKPYSVLEDSSVGEQAAIGPFSRLRPGAELAAETHVGNFVEIKKAVVGKGTKVNHLTYVGDAEIGSGCNIGAGVITCNYDGANKFKTLIGDNVFVGSDVQLVAPVKVNNGATIGAGSTITKDVAAGELVTTRVPQRHTADWERPSKKK.

The interval 1–227 (MSKLSVVILA…MMEVEGANNR (227 aa)) is pyrophosphorylase. UDP-N-acetyl-alpha-D-glucosamine contacts are provided by residues 9–12 (LAAG), Lys23, Gln74, 79–80 (GT), 101–103 (YGD), Gly138, Glu152, Asn167, and Asn225. Asp103 lines the Mg(2+) pocket. Asn225 is a binding site for Mg(2+). Positions 228–248 (LQLAALERYFQRKQATALLLA) are linker. The interval 249–454 (GVSLADPERF…ADWERPSKKK (206 aa)) is N-acetyltransferase. Residues Arg331 and Lys349 each coordinate UDP-N-acetyl-alpha-D-glucosamine. The active-site Proton acceptor is His361. UDP-N-acetyl-alpha-D-glucosamine-binding residues include Tyr364 and Asn375. Acetyl-CoA-binding positions include Ala378, 384 to 385 (NY), Ser403, Ala421, and Arg438.

The protein in the N-terminal section; belongs to the N-acetylglucosamine-1-phosphate uridyltransferase family. This sequence in the C-terminal section; belongs to the transferase hexapeptide repeat family. Homotrimer. Requires Mg(2+) as cofactor.

Its subcellular location is the cytoplasm. The enzyme catalyses alpha-D-glucosamine 1-phosphate + acetyl-CoA = N-acetyl-alpha-D-glucosamine 1-phosphate + CoA + H(+). The catalysed reaction is N-acetyl-alpha-D-glucosamine 1-phosphate + UTP + H(+) = UDP-N-acetyl-alpha-D-glucosamine + diphosphate. It participates in nucleotide-sugar biosynthesis; UDP-N-acetyl-alpha-D-glucosamine biosynthesis; N-acetyl-alpha-D-glucosamine 1-phosphate from alpha-D-glucosamine 6-phosphate (route II): step 2/2. Its pathway is nucleotide-sugar biosynthesis; UDP-N-acetyl-alpha-D-glucosamine biosynthesis; UDP-N-acetyl-alpha-D-glucosamine from N-acetyl-alpha-D-glucosamine 1-phosphate: step 1/1. It functions in the pathway bacterial outer membrane biogenesis; LPS lipid A biosynthesis. Functionally, catalyzes the last two sequential reactions in the de novo biosynthetic pathway for UDP-N-acetylglucosamine (UDP-GlcNAc). The C-terminal domain catalyzes the transfer of acetyl group from acetyl coenzyme A to glucosamine-1-phosphate (GlcN-1-P) to produce N-acetylglucosamine-1-phosphate (GlcNAc-1-P), which is converted into UDP-GlcNAc by the transfer of uridine 5-monophosphate (from uridine 5-triphosphate), a reaction catalyzed by the N-terminal domain. The chain is Bifunctional protein GlmU from Actinobacillus succinogenes (strain ATCC 55618 / DSM 22257 / CCUG 43843 / 130Z).